The sequence spans 434 residues: Beta-phenylalanine transaminase (434 aa).

A (S)-3-amino-3-phenylpropanoate-binding site is contributed by Arg41. 132–133 (GT) is a pyridoxal 5'-phosphate binding site. At Lys267 the chain carries N6-(pyridoxal phosphate)lysine. Thr300 lines the pyridoxal 5'-phosphate pocket.

It belongs to the class-III pyridoxal-phosphate-dependent aminotransferase family. As to quaternary structure, homodimer. The cofactor is pyridoxal 5'-phosphate.

The enzyme catalyses (S)-3-amino-3-phenylpropanoate + 2-oxoglutarate = 3-oxo-3-phenylpropanoate + L-glutamate. It catalyses the reaction (S)-3-amino-3-phenylpropanoate + pyruvate = 3-oxo-3-phenylpropanoate + L-alanine. Its activity is regulated as follows. Is inhibited by 2-aminooxyacetate (AOA), a mimic of beta-alanine and a known inhibitor of aminotransferases. Its function is as follows. Aminotransferase that acts exclusively on beta-amino acids and exhibits a broad substrate range in vitro, accepting meta-, para- and, to a lesser extent, ortho-substituted beta-phenylalanine derivatives as amino donors, and 2-oxoglutarate or pyruvate as amino acceptors. Is highly enantioselective toward (S)-beta-phenylalanine (is not active with (R)-beta-phenylalanine) and derivatives with different substituents on the phenyl ring, allowing the kinetic resolution of various racemic beta-amino acids to yield (R)-beta-amino acids with &gt;95% enantiomeric excess (ee). Highly prefers aromatic beta-amino acids over aliphatic beta-amino acids; cannot use beta-alanine or beta-glutamate as substrate. Is likely involved in the beta-phenylalanine degradation pathway that allows V.paradoxus strain CBF3 to use beta-phenylalanine as a sole nitrogen source. The protein is Beta-phenylalanine transaminase of Variovorax paradoxus.